The primary structure comprises 160 residues: Putative 4-hydroxy-4-methyl-2-oxoglutarate aldolase (160 aa).

Residues 75–78 and R97 contribute to the substrate site; that span reads GDQL. A divalent metal cation is bound at residue D98.

Belongs to the class II aldolase/RraA-like family. In terms of assembly, homotrimer. Requires a divalent metal cation as cofactor.

It carries out the reaction 4-hydroxy-4-methyl-2-oxoglutarate = 2 pyruvate. The enzyme catalyses oxaloacetate + H(+) = pyruvate + CO2. Its function is as follows. Catalyzes the aldol cleavage of 4-hydroxy-4-methyl-2-oxoglutarate (HMG) into 2 molecules of pyruvate. Also contains a secondary oxaloacetate (OAA) decarboxylase activity due to the common pyruvate enolate transition state formed following C-C bond cleavage in the retro-aldol and decarboxylation reactions. The sequence is that of Putative 4-hydroxy-4-methyl-2-oxoglutarate aldolase from Vibrio parahaemolyticus serotype O3:K6 (strain RIMD 2210633).